Consider the following 270-residue polypeptide: Protein FAM110D (270 aa).

Residues 1-16 (MLLASPSTPSRGRTPS) are compositionally biased toward low complexity. Disordered stretches follow at residues 1–83 (MLLA…RPDS), 117–142 (RDVA…PQDA), and 186–244 (PQSW…QVSV). Basic residues predominate over residues 68 to 78 (RPARRGSGRRL).

Belongs to the FAM110 family.

This is Protein FAM110D (FAM110D) from Bos taurus (Bovine).